We begin with the raw amino-acid sequence, 269 residues long: Tungstate-binding protein TupA (269 aa).

A signal peptide spans 1–17; it reads MKKIISLALALALSASA.

The complex is composed of two ATP-binding proteins (TupC), two transmembrane proteins (TupB) and a solute-binding protein (TupA).

Its subcellular location is the periplasm. In terms of biological role, part of an ABC transporter complex involved in ultra-high affinity tungstate uptake. Specifically binds tungstate. This Campylobacter jejuni subsp. jejuni serotype O:2 (strain ATCC 700819 / NCTC 11168) protein is Tungstate-binding protein TupA.